Here is a 60-residue protein sequence, read N- to C-terminus: Large ribosomal subunit protein bL32 (60 aa).

The segment covering 1–23 (MACPKKKTSNAKRDQRRAHWRKQ) has biased composition (basic residues). Residues 1 to 60 (MACPKKKTSNAKRDQRRAHWRKQAAREAQKALSLGKSVLSGRSNSFVYPTKEEEEGEDEE) are disordered.

It belongs to the bacterial ribosomal protein bL32 family.

In Microcystis aeruginosa (strain NIES-843 / IAM M-2473), this protein is Large ribosomal subunit protein bL32.